Consider the following 95-residue polypeptide: Small ubiquitin-related modifier 2-B (95 aa).

Lys11 is covalently cross-linked (Glycyl lysine isopeptide (Lys-Gly) (interchain with G-Cter in SUMO)). The region spanning 16-95 (DHINLKVAGQ…VFQQQTGGSY (80 aa)) is the Ubiquitin-like domain. Gly93 participates in a covalent cross-link: Glycyl lysine isopeptide (Gly-Lys) (interchain with K-? in acceptor proteins). The propeptide occupies 94 to 95 (SY).

Belongs to the ubiquitin family. SUMO subfamily. Interacts with sae2 and ube2i. Covalently attached to a number of proteins, including top2. Post-translationally, polymeric chains can be formed through Lys-11 cross-linking. Cleavage of precursor form by a sentrin-specific protease is necessary for function.

Its subcellular location is the nucleus. In terms of biological role, ubiquitin-like protein that can be covalently attached to proteins as a monomer or as a lysine-linked polymer. Covalent attachment via an isopeptide bond to its substrates requires prior activation by the E1 complex sae1-sae2 and linkage to the E2 enzyme ube2i, and can be promoted by an E3 ligase such as pias1-4. This post-translational modification on lysine residues of proteins plays a crucial role in a number of cellular processes such as nuclear transport, DNA replication and repair, mitosis and signal transduction. Polymeric sumo2 chains are also susceptible to polyubiquitination which functions as a signal for proteasomal degradation of modified proteins. In Xenopus laevis (African clawed frog), this protein is Small ubiquitin-related modifier 2-B (sumo2-b).